We begin with the raw amino-acid sequence, 458 residues long: tRNA(Ile)-lysidine synthase (458 aa).

An ATP-binding site is contributed by 35-40; sequence SGGVDS.

Belongs to the tRNA(Ile)-lysidine synthase family.

The protein resides in the cytoplasm. It carries out the reaction cytidine(34) in tRNA(Ile2) + L-lysine + ATP = lysidine(34) in tRNA(Ile2) + AMP + diphosphate + H(+). In terms of biological role, ligates lysine onto the cytidine present at position 34 of the AUA codon-specific tRNA(Ile) that contains the anticodon CAU, in an ATP-dependent manner. Cytidine is converted to lysidine, thus changing the amino acid specificity of the tRNA from methionine to isoleucine. In Nitrosomonas europaea (strain ATCC 19718 / CIP 103999 / KCTC 2705 / NBRC 14298), this protein is tRNA(Ile)-lysidine synthase.